A 376-amino-acid polypeptide reads, in one-letter code: 2-aminoethylphosphonate--pyruvate transaminase 2 (376 aa).

K194 carries the N6-(pyridoxal phosphate)lysine modification.

This sequence belongs to the class-V pyridoxal-phosphate-dependent aminotransferase family. PhnW subfamily. In terms of assembly, homodimer. Requires pyridoxal 5'-phosphate as cofactor.

The enzyme catalyses (2-aminoethyl)phosphonate + pyruvate = phosphonoacetaldehyde + L-alanine. Its function is as follows. Involved in phosphonate degradation. The polypeptide is 2-aminoethylphosphonate--pyruvate transaminase 2 (Burkholderia lata (strain ATCC 17760 / DSM 23089 / LMG 22485 / NCIMB 9086 / R18194 / 383)).